We begin with the raw amino-acid sequence, 233 residues long: Orotidine 5'-phosphate decarboxylase (233 aa).

Residues aspartate 11, lysine 33, 60-69 (DLKFHDIPNT), threonine 120, arginine 181, glutamine 190, glycine 210, and arginine 211 each bind substrate. Residue lysine 62 is the Proton donor of the active site.

The protein belongs to the OMP decarboxylase family. Type 1 subfamily. Homodimer.

It catalyses the reaction orotidine 5'-phosphate + H(+) = UMP + CO2. Its pathway is pyrimidine metabolism; UMP biosynthesis via de novo pathway; UMP from orotate: step 2/2. In terms of biological role, catalyzes the decarboxylation of orotidine 5'-monophosphate (OMP) to uridine 5'-monophosphate (UMP). The polypeptide is Orotidine 5'-phosphate decarboxylase (Vibrio parahaemolyticus serotype O3:K6 (strain RIMD 2210633)).